The primary structure comprises 123 residues: Chaperone protein SycN (123 aa).

As to quaternary structure, interacts with YscB to form a complex which specifically binds to YopN.

Its subcellular location is the cytoplasm. The protein resides in the cell inner membrane. Functionally, functions as a specific chaperone for YopN. It could facilitate the secretion and the subsequent translocation of YopN. This is Chaperone protein SycN (sycN) from Yersinia enterocolitica.